Reading from the N-terminus, the 1141-residue chain is Tetratricopeptide repeat protein 17 (1141 aa).

The stretch at 295–328 (FTSYYTLGNIYAMLGEYNHSVLCYDHALQARPGF) is one TPR 1 repeat. Residues 340–382 (CQQKLEQKLEAQHRSLQRTLNELKEYQKQHDHYLRQQEILEKH) adopt a coiled-coil conformation. TPR repeat units follow at residues 619–652 (WLIL…APLQ), 689–722 (PLTF…TTKC), 1014–1048 (SWVL…APHQ), 1051–1084 (DVPL…APHF), and 1085–1118 (AVNH…QPEF).

It belongs to the TTC17 family. Interacts with CATIP. As to expression, expressed in germ cells as well as in somatic cells of the testis (at protein level).

The protein resides in the cytoplasm. It is found in the cell membrane. Its subcellular location is the cytoskeleton. In terms of biological role, plays a role in primary ciliogenesis by modulating actin polymerization. The chain is Tetratricopeptide repeat protein 17 (TTC17) from Homo sapiens (Human).